We begin with the raw amino-acid sequence, 227 residues long: Cytochrome c oxidase subunit 2 (227 aa).

Residues 1–14 are Mitochondrial intermembrane-facing; it reads MAYPLQLGLQDATS. The chain crosses the membrane as a helical span at residues 15–45; sequence PIMEELMNFHDHTLMIVFLISSLVLYVISSM. Residues 46–59 are Mitochondrial matrix-facing; it reads LTTKLTHTSTMDAQ. Residues 60-87 traverse the membrane as a helical segment; sequence EVETIWTILPAVILIMIALPSLRILYMM. The Mitochondrial intermembrane portion of the chain corresponds to 88 to 227; sequence DEINNPVLTV…NFETWSVSMI (140 aa). Residues His-161, Cys-196, Glu-198, Cys-200, His-204, and Met-207 each contribute to the Cu cation site. Glu-198 is a binding site for Mg(2+).

Belongs to the cytochrome c oxidase subunit 2 family. In terms of assembly, component of the cytochrome c oxidase (complex IV, CIV), a multisubunit enzyme composed of 14 subunits. The complex is composed of a catalytic core of 3 subunits MT-CO1, MT-CO2 and MT-CO3, encoded in the mitochondrial DNA, and 11 supernumerary subunits COX4I, COX5A, COX5B, COX6A, COX6B, COX6C, COX7A, COX7B, COX7C, COX8 and NDUFA4, which are encoded in the nuclear genome. The complex exists as a monomer or a dimer and forms supercomplexes (SCs) in the inner mitochondrial membrane with NADH-ubiquinone oxidoreductase (complex I, CI) and ubiquinol-cytochrome c oxidoreductase (cytochrome b-c1 complex, complex III, CIII), resulting in different assemblies (supercomplex SCI(1)III(2)IV(1) and megacomplex MCI(2)III(2)IV(2)). Found in a complex with TMEM177, COA6, COX18, COX20, SCO1 and SCO2. Interacts with TMEM177 in a COX20-dependent manner. Interacts with COX20. Interacts with COX16. It depends on Cu cation as a cofactor.

The protein resides in the mitochondrion inner membrane. The enzyme catalyses 4 Fe(II)-[cytochrome c] + O2 + 8 H(+)(in) = 4 Fe(III)-[cytochrome c] + 2 H2O + 4 H(+)(out). In terms of biological role, component of the cytochrome c oxidase, the last enzyme in the mitochondrial electron transport chain which drives oxidative phosphorylation. The respiratory chain contains 3 multisubunit complexes succinate dehydrogenase (complex II, CII), ubiquinol-cytochrome c oxidoreductase (cytochrome b-c1 complex, complex III, CIII) and cytochrome c oxidase (complex IV, CIV), that cooperate to transfer electrons derived from NADH and succinate to molecular oxygen, creating an electrochemical gradient over the inner membrane that drives transmembrane transport and the ATP synthase. Cytochrome c oxidase is the component of the respiratory chain that catalyzes the reduction of oxygen to water. Electrons originating from reduced cytochrome c in the intermembrane space (IMS) are transferred via the dinuclear copper A center (CU(A)) of subunit 2 and heme A of subunit 1 to the active site in subunit 1, a binuclear center (BNC) formed by heme A3 and copper B (CU(B)). The BNC reduces molecular oxygen to 2 water molecules using 4 electrons from cytochrome c in the IMS and 4 protons from the mitochondrial matrix. The sequence is that of Cytochrome c oxidase subunit 2 (MT-CO2) from Malacothrix typica (Long-eared mouse).